The following is a 97-amino-acid chain: Large ribosomal subunit protein bL27 (97 aa).

Positions 1–12 are excised as a propeptide; sequence MLKMNLANLQLF. A disordered region spans residues 14-37; that stretch reads HKKGGGSTSNGRDSQAKRLGAKAA.

Belongs to the bacterial ribosomal protein bL27 family. The N-terminus is cleaved by ribosomal processing cysteine protease Prp.

This is Large ribosomal subunit protein bL27 from Streptococcus gordonii (strain Challis / ATCC 35105 / BCRC 15272 / CH1 / DL1 / V288).